We begin with the raw amino-acid sequence, 295 residues long: Aspartate carbamoyltransferase catalytic subunit (295 aa).

Carbamoyl phosphate is bound by residues Arg-49 and Thr-50. Position 77 (Lys-77) interacts with L-aspartate. Carbamoyl phosphate-binding residues include Arg-99, His-127, and Gln-130. L-aspartate-binding residues include Arg-161 and Arg-212. The carbamoyl phosphate site is built by Gly-251 and Pro-252.

Belongs to the aspartate/ornithine carbamoyltransferase superfamily. ATCase family. Heterododecamer (2C3:3R2) of six catalytic PyrB chains organized as two trimers (C3), and six regulatory PyrI chains organized as three dimers (R2).

The enzyme catalyses carbamoyl phosphate + L-aspartate = N-carbamoyl-L-aspartate + phosphate + H(+). Its pathway is pyrimidine metabolism; UMP biosynthesis via de novo pathway; (S)-dihydroorotate from bicarbonate: step 2/3. Its function is as follows. Catalyzes the condensation of carbamoyl phosphate and aspartate to form carbamoyl aspartate and inorganic phosphate, the committed step in the de novo pyrimidine nucleotide biosynthesis pathway. The sequence is that of Aspartate carbamoyltransferase catalytic subunit from Campylobacter jejuni subsp. jejuni serotype O:6 (strain 81116 / NCTC 11828).